The sequence spans 212 residues: Dephospho-CoA kinase (212 aa).

In terms of domain architecture, DPCK spans 8–212; sequence LVGVTGGLGS…QLLQQAMLRR (205 aa). 16–21 serves as a coordination point for ATP; it reads GSGKSM.

Belongs to the CoaE family.

It localises to the cytoplasm. It carries out the reaction 3'-dephospho-CoA + ATP = ADP + CoA + H(+). Its pathway is cofactor biosynthesis; coenzyme A biosynthesis; CoA from (R)-pantothenate: step 5/5. Functionally, catalyzes the phosphorylation of the 3'-hydroxyl group of dephosphocoenzyme A to form coenzyme A. The chain is Dephospho-CoA kinase from Chlorobium chlorochromatii (strain CaD3).